The primary structure comprises 285 residues: Complex I assembly factor TIMMDC1, mitochondrial (285 aa).

Transmembrane regions (helical) follow at residues 80–100 (AAVS…FIYA), 137–159 (RWSW…LTVY), 165–185 (MSHF…NLGV), and 188–208 (LVAG…LLMA). The disordered stretch occupies residues 265-285 (RIEELLSLPRNPSSPHQQSKH). Positions 274–285 (RNPSSPHQQSKH) are enriched in polar residues. Ser277 is modified (phosphoserine).

It belongs to the Tim17/Tim22/Tim23 family. Associates with the intermediate 315 kDa subcomplex of incompletely assembled complex I. Interacts with TMEM70.

The protein localises to the mitochondrion membrane. In terms of biological role, chaperone protein involved in the assembly of the mitochondrial NADH:ubiquinone oxidoreductase complex (complex I). Participates in constructing the membrane arm of complex I. This chain is Complex I assembly factor TIMMDC1, mitochondrial, found in Mus musculus (Mouse).